The chain runs to 134 residues: Probable glycine cleavage system H protein (134 aa).

The region spanning 29–110 (TVLVGITDYA…PYGAWIAKIK (82 aa)) is the Lipoyl-binding domain. Lys-70 is modified (N6-lipoyllysine).

It belongs to the GcvH family. In terms of assembly, the glycine cleavage system is composed of four proteins: P, T, L and H. It depends on (R)-lipoate as a cofactor.

In terms of biological role, the glycine cleavage system catalyzes the degradation of glycine. The H protein shuttles the methylamine group of glycine from the P protein to the T protein. This is Probable glycine cleavage system H protein from Pyrococcus horikoshii (strain ATCC 700860 / DSM 12428 / JCM 9974 / NBRC 100139 / OT-3).